The following is a 179-amino-acid chain: uncharacterized protein (179 aa).

Residues 5–25 (MLAGIGIGVAAALGVAAVASL) traverse the membrane as a helical segment.

This sequence to Rickettsia 17 kDa surface antigen.

Its subcellular location is the membrane. This is an uncharacterized protein from Escherichia coli O6:H1 (strain CFT073 / ATCC 700928 / UPEC).